A 481-amino-acid chain; its full sequence is ATP synthase subunit beta, chloroplastic (481 aa).

ATP is bound at residue 162 to 169; it reads GGAGVGKT.

It belongs to the ATPase alpha/beta chains family. In terms of assembly, F-type ATPases have 2 components, F(1) - the catalytic core - and F(0) - the membrane proton channel. F(1) has five subunits: alpha(3), beta(3), gamma(1), delta(1), epsilon(1). F(0) has four main subunits: a(1), b(1), b'(1) and c(10-14). The alpha and beta chains form an alternating ring which encloses part of the gamma chain. F(1) is attached to F(0) by a central stalk formed by the gamma and epsilon chains, while a peripheral stalk is formed by the delta, b and b' chains.

The protein localises to the plastid. It localises to the chloroplast thylakoid membrane. The catalysed reaction is ATP + H2O + 4 H(+)(in) = ADP + phosphate + 5 H(+)(out). In terms of biological role, f(1)F(0) ATP synthase produces ATP from ADP in the presence of a proton or sodium gradient. F-type ATPases consist of two structural domains, F(1) containing the extramembraneous catalytic core and F(0) containing the membrane proton channel, linked together by a central stalk and a peripheral stalk. During catalysis, ATP synthesis in the catalytic domain of F(1) is coupled via a rotary mechanism of the central stalk subunits to proton translocation. Produces ATP from ADP in the presence of a proton gradient across the membrane. The catalytic sites are hosted primarily by the beta subunits. The chain is ATP synthase subunit beta, chloroplastic from Chlamydomonas reinhardtii (Chlamydomonas smithii).